A 207-amino-acid chain; its full sequence is Vexin (207 aa).

Residues 56-100 (ELLPHRGDRRDPGDRRRFGRLQTARPPTAHPAKASARPVGISEPK) form a disordered region. Basic and acidic residues predominate over residues 58–71 (LPHRGDRRDPGDRR).

Belongs to the vexin family.

The protein localises to the cell membrane. Its subcellular location is the nucleus. In terms of biological role, required for neurogenesis in the neural plate and retina. Strongly cooperates with neural bHLH factors to promote neurogenesis. This is Vexin from Homo sapiens (Human).